We begin with the raw amino-acid sequence, 189 residues long: Thymidine kinase (189 aa).

ATP-binding positions include Gly-9 to Thr-16 and Asp-85 to Gln-88. Residue Glu-86 is the Proton acceptor of the active site. Zn(2+)-binding residues include Cys-143, Cys-146, Cys-180, and His-183.

The protein belongs to the thymidine kinase family. Homotetramer.

It is found in the cytoplasm. The catalysed reaction is thymidine + ATP = dTMP + ADP + H(+). The chain is Thymidine kinase from Streptococcus pyogenes serotype M1.